Here is a 127-residue protein sequence, read N- to C-terminus: MSVTYNKKKKRNVVVGVVHIHATYNNIIVTITDQQGHSLVSTSAGAYGFKGSKKATPYAAQETAGHAVKTVVEQNGMKTVSIKVSGPGAGREAAIRAVQACNLNVTSIKDTTKLPHNGCKLPGRRRV.

The protein belongs to the universal ribosomal protein uS11 family. As to quaternary structure, part of the 30S ribosomal subunit. Interacts with proteins S7 and S18. Binds to IF-3.

Located on the platform of the 30S subunit, it bridges several disparate RNA helices of the 16S rRNA. Forms part of the Shine-Dalgarno cleft in the 70S ribosome. The sequence is that of Small ribosomal subunit protein uS11 from Ehrlichia ruminantium (strain Gardel).